The following is a 401-amino-acid chain: Nodal homolog 3-B (401 aa).

The signal sequence occupies residues 1 to 18; the sequence is MAFLSLFLCLVFSSPLMA. A propeptide spanning residues 19 to 274 is cleaved from the precursor; that stretch reads MPPALQGRKA…KVNGFRRLRR (256 aa). Asn168, Asn337, and Asn344 each carry an N-linked (GlcNAc...) asparagine glycan. Intrachain disulfides connect Cys299-Cys365 and Cys328-Cys396.

The protein belongs to the TGF-beta family. Monomer. The propeptide region interacts with bmp4 in a non-covalent manner. Expressed in the dorsal marginal region of late blastula, becoming restricted to the Spemann organizer at the early gastrula stage.

It localises to the secreted. Exhibits mesoderm-dorsalizing activity and neural-inducing activity, but lacks mesoderm-inducing activity. Regulates the expression of specific mesodermal and neural genes. Induces convergent extension movements at the embryonic midline by activating the fgf signaling pathway to induce t/bra expression in the organizer region. Acts with wnt11 to induce Spemann organizer cells and induce axis formation. The unprocessed protein antagonizes bmp-signaling. The protein is Nodal homolog 3-B of Xenopus tropicalis (Western clawed frog).